The primary structure comprises 38 residues: Large ribosomal subunit protein bL36c (38 aa).

The protein belongs to the bacterial ribosomal protein bL36 family.

It localises to the plastid. Its subcellular location is the apicoplast. In Theileria parva (East coast fever infection agent), this protein is Large ribosomal subunit protein bL36c (rpl36).